A 354-amino-acid chain; its full sequence is Protein ECM8 (354 aa).

May be involved in cell wall organization and biogenesis. This Saccharomyces cerevisiae (strain ATCC 204508 / S288c) (Baker's yeast) protein is Protein ECM8 (ECM8).